Reading from the N-terminus, the 143-residue chain is 3-dehydroquinate dehydratase (143 aa).

Tyr-22 (proton acceptor) is an active-site residue. Substrate contacts are provided by Asn-73, His-79, and Asp-86. The Proton donor role is filled by His-99. Residues 100 to 101 (IS) and Arg-110 contribute to the substrate site.

This sequence belongs to the type-II 3-dehydroquinase family. As to quaternary structure, homododecamer.

The enzyme catalyses 3-dehydroquinate = 3-dehydroshikimate + H2O. The protein operates within metabolic intermediate biosynthesis; chorismate biosynthesis; chorismate from D-erythrose 4-phosphate and phosphoenolpyruvate: step 3/7. Functionally, catalyzes a trans-dehydration via an enolate intermediate. The sequence is that of 3-dehydroquinate dehydratase from Salinispora arenicola (strain CNS-205).